A 128-amino-acid chain; its full sequence is Large ribosomal subunit protein bL20c (128 aa).

Belongs to the bacterial ribosomal protein bL20 family.

Its subcellular location is the plastid. In terms of biological role, binds directly to 23S ribosomal RNA and is necessary for the in vitro assembly process of the 50S ribosomal subunit. It is not involved in the protein synthesizing functions of that subunit. This Lathraea clandestina (Purple toothwort) protein is Large ribosomal subunit protein bL20c (rpl20).